The chain runs to 49 residues: Small ribosomal subunit protein uS14B (49 aa).

This sequence belongs to the universal ribosomal protein uS14 family. Zinc-binding uS14 subfamily. Part of the 30S ribosomal subunit.

Binds 16S rRNA, required for the assembly of 30S particles. The sequence is that of Small ribosomal subunit protein uS14B from Natronomonas pharaonis (strain ATCC 35678 / DSM 2160 / CIP 103997 / JCM 8858 / NBRC 14720 / NCIMB 2260 / Gabara) (Halobacterium pharaonis).